Consider the following 182-residue polypeptide: UPF0397 protein BCA_2731 (182 aa).

Helical transmembrane passes span 9–29, 40–60, 71–91, 114–134, and 142–162; these read VVAIGIGAALYGILGLWGFSI, AILTVFGALFGPVAGLLIGLI, WGIWWGWVISSGIIGFAMGLI, ITGLIGIVIAIIFAGAFDIIV, and IVIQVLGATIADVIVFLVLGL.

It belongs to the UPF0397 family.

Its subcellular location is the cell membrane. The polypeptide is UPF0397 protein BCA_2731 (Bacillus cereus (strain 03BB102)).